The following is a 139-amino-acid chain: Large-conductance mechanosensitive channel (139 aa).

Transmembrane regions (helical) follow at residues 16–36 (VIDL…VKAL), 40–60 (IVMP…LAWV), and 79–99 (GAFI…FMLV).

It belongs to the MscL family. Homopentamer.

It is found in the cell inner membrane. Functionally, channel that opens in response to stretch forces in the membrane lipid bilayer. May participate in the regulation of osmotic pressure changes within the cell. In Phenylobacterium zucineum (strain HLK1), this protein is Large-conductance mechanosensitive channel.